Consider the following 499-residue polypeptide: Lysine--tRNA ligase (499 aa).

Glu408 and Glu415 together coordinate Mg(2+).

The protein belongs to the class-II aminoacyl-tRNA synthetase family. Homodimer. Mg(2+) serves as cofactor.

The protein resides in the cytoplasm. It catalyses the reaction tRNA(Lys) + L-lysine + ATP = L-lysyl-tRNA(Lys) + AMP + diphosphate. The chain is Lysine--tRNA ligase from Bacillus cereus (strain B4264).